Consider the following 415-residue polypeptide: Tyrosine-protein phosphatase non-receptor type 2 (415 aa).

The region spanning 5-275 (IEREFEELDT…RFSYMAIIEG (271 aa)) is the Tyrosine-protein phosphatase domain. A Phosphotyrosine modification is found at tyrosine 22. Residue serine 52 is modified to Phosphoserine. Phosphotyrosine is present on tyrosine 68. Residues aspartate 182, 216 to 222 (CSAGIGR), and glutamine 260 contribute to the substrate site. The active-site Phosphocysteine intermediate is cysteine 216. Cysteine 216 carries the post-translational modification S-nitrosocysteine. Phosphoserine is present on residues serine 293, serine 298, and serine 304. Residues 346 to 415 (ESALRKRIRE…WTLFFQQNAL (70 aa)) are endoplasmic reticulum location. Positions 376–415 (ERKRKRWLYWQPILTKMGFMSVILVGAFVGWTLFFQQNAL) are mediates interaction with STX17.

Belongs to the protein-tyrosine phosphatase family. Non-receptor class 1 subfamily. Interacts with RMDN3. Isoform 1 interacts with TMED9. Isoform 1 interacts with STX17; dephosphorylates STX17. Interacts with ITGA1 (via cytoplasmic domain); activates the phosphatase activity towards EGFR. Interacts with TRAF2; probably involved in tumor necrosis factor-mediated signaling. Interacts with MET. Interacts with FAM220A and STAT3; interaction with FAM220A promotes interaction of PTPN2 with transcriptional activator STAT3, leading to dephosphorylation of STAT3 by PTPN2 and negative regulation of STAT3 transcriptional activator activity. In terms of processing, specifically phosphorylated in a cell cycle-dependent manner by cyclin-dependent kinases CDK1 and CDK2. Probably activated through phosphorylation by PKR. Ubiquitously expressed. Isoform 2 is probably the major isoform. Isoform 1 is expressed in T-cells and in placenta.

It localises to the endoplasmic reticulum. The protein localises to the endoplasmic reticulum-Golgi intermediate compartment. Its subcellular location is the nucleus. The protein resides in the cytoplasm. It is found in the cell membrane. It carries out the reaction O-phospho-L-tyrosyl-[protein] + H2O = L-tyrosyl-[protein] + phosphate. Non-receptor type tyrosine-specific phosphatase that dephosphorylates receptor protein tyrosine kinases including INSR, EGFR, CSF1R, PDGFR. Also dephosphorylates non-receptor protein tyrosine kinases like JAK1, JAK2, JAK3, Src family kinases, STAT1, STAT3 and STAT6 either in the nucleus or the cytoplasm. Negatively regulates numerous signaling pathways and biological processes like hematopoiesis, inflammatory response, cell proliferation and differentiation, and glucose homeostasis. Plays a multifaceted and important role in the development of the immune system. Functions in T-cell receptor signaling through dephosphorylation of FYN and LCK to control T-cells differentiation and activation. Dephosphorylates CSF1R, negatively regulating its downstream signaling and macrophage differentiation. Negatively regulates cytokine (IL2/interleukin-2 and interferon)-mediated signaling through dephosphorylation of the cytoplasmic kinases JAK1, JAK3 and their substrate STAT1, that propagate signaling downstream of the cytokine receptors. Also regulates the IL6/interleukin-6 and IL4/interleukin-4 cytokine signaling through dephosphorylation of STAT3 and STAT6 respectively. In addition to the immune system, it is involved in anchorage-dependent, negative regulation of EGF-stimulated cell growth. Activated by the integrin ITGA1/ITGB1, it dephosphorylates EGFR and negatively regulates EGF signaling. Dephosphorylates PDGFRB and negatively regulates platelet-derived growth factor receptor-beta signaling pathway and therefore cell proliferation. Negatively regulates tumor necrosis factor-mediated signaling downstream via MAPK through SRC dephosphorylation. May also regulate the hepatocyte growth factor receptor signaling pathway through dephosphorylation of the hepatocyte growth factor receptor MET. Also plays an important role in glucose homeostasis. For instance, negatively regulates the insulin receptor signaling pathway through the dephosphorylation of INSR and control gluconeogenesis and liver glucose production through negative regulation of the IL6 signaling pathways. May also bind DNA. The sequence is that of Tyrosine-protein phosphatase non-receptor type 2 (PTPN2) from Homo sapiens (Human).